Reading from the N-terminus, the 823-residue chain is Ankyrin repeat domain-containing protein 20A1 (823 aa).

ANK repeat units lie at residues 66-95, 99-128, 132-161, 165-194, and 198-227; these read QHRT…QIDV, ENRT…NPNL, YGNT…HIEA, DNNT…SSHA, and LRRS…DVFA. 2 disordered regions span residues 301-343 and 355-402; these read VPEK…EVED and VQTL…LSEN. The span at 372–384 shows a compositional bias: basic and acidic residues; that stretch reads QERHERSEKKQPQ. 3 coiled-coil regions span residues 431-480, 565-724, and 776-805; these read KKLK…KQLE, EMIT…NNST, and LVLE…EKTE.

This is Ankyrin repeat domain-containing protein 20A1 (ANKRD20A1) from Homo sapiens (Human).